The chain runs to 245 residues: 8-amino-3,8-dideoxy-manno-octulosonate cytidylyltransferase (245 aa).

This sequence belongs to the KdsB family.

Its subcellular location is the cytoplasm. It carries out the reaction 8-amino-3,8-dideoxy-alpha-D-manno-octulosonate + CTP = CMP-8-amino-3,8-dideoxy-alpha-D-manno-oct-2-ulosonate + diphosphate. The protein operates within bacterial outer membrane biogenesis; lipopolysaccharide biosynthesis. Functionally, activates KDO8N (a required 8-carbon sugar) for incorporation into bacterial lipopolysaccharide in the Shewanella genus. In Shewanella sp. (strain W3-18-1), this protein is 8-amino-3,8-dideoxy-manno-octulosonate cytidylyltransferase.